The primary structure comprises 463 residues: Nuclear hormone receptor family member nhr-79 (463 aa).

Residues Arg-3 to Ala-81 constitute a DNA-binding region (nuclear receptor). NR C4-type zinc fingers lie at residues Cys-6–Cys-27 and Cys-43–Cys-64. The interval Arg-83 to Phe-119 is disordered. In terms of domain architecture, NR LBD spans Tyr-203 to Tyr-463.

The protein belongs to the nuclear hormone receptor family.

The protein resides in the nucleus. Its function is as follows. Orphan nuclear receptor. In Caenorhabditis elegans, this protein is Nuclear hormone receptor family member nhr-79 (nhr-79).